The following is a 258-amino-acid chain: Enterotoxin type D (258 aa).

An N-terminal signal peptide occupies residues methionine 1–alanine 25. 4 residues coordinate Zn(2+): aspartate 212, histidine 248, histidine 250, and aspartate 252.

This sequence belongs to the staphylococcal/streptococcal toxin family. As to quaternary structure, homodimer; zinc-dependent. Interacts with MHC class II molecules composed of alpha/HLA-DRA and beta/HLA-DRB1 chains. The cofactor is Zn(2+).

The protein resides in the secreted. Its function is as follows. Staphylococcal enterotoxin that activates the host immune system by binding as unprocessed molecules to major histocompatibility (MHC) complex class II and T-cell receptor (TCR) molecules. In turn, this ternary complex activates a large number of T-lymphocytes initiating a systemic release of pro-inflammatory cytokines. In addition, induces B-cell proliferation and differentiation in the presence of T-cells. Causes also the intoxication staphylococcal food poisoning syndrome. This is Enterotoxin type D (entD) from Staphylococcus aureus.